The primary structure comprises 265 residues: Glutamate 5-kinase (265 aa).

Position 15 (Lys15) interacts with ATP. Ser55, Asp142, and Asn158 together coordinate substrate. Residues 178-179 and 220-226 contribute to the ATP site; these read SD and TGGMVTK.

Belongs to the glutamate 5-kinase family.

It is found in the cytoplasm. The catalysed reaction is L-glutamate + ATP = L-glutamyl 5-phosphate + ADP. Its pathway is amino-acid biosynthesis; L-proline biosynthesis; L-glutamate 5-semialdehyde from L-glutamate: step 1/2. In terms of biological role, catalyzes the transfer of a phosphate group to glutamate to form L-glutamate 5-phosphate. The chain is Glutamate 5-kinase from Lactiplantibacillus plantarum (strain ATCC BAA-793 / NCIMB 8826 / WCFS1) (Lactobacillus plantarum).